The chain runs to 211 residues: Thiamine-phosphate synthase (211 aa).

Residues 37 to 41 (QLRIK) and Asn-69 contribute to the 4-amino-2-methyl-5-(diphosphooxymethyl)pyrimidine site. Mg(2+) contacts are provided by Asp-70 and Asp-89. Ser-108 provides a ligand contact to 4-amino-2-methyl-5-(diphosphooxymethyl)pyrimidine. Position 134-136 (134-136 (TQT)) interacts with 2-[(2R,5Z)-2-carboxy-4-methylthiazol-5(2H)-ylidene]ethyl phosphate. 4-amino-2-methyl-5-(diphosphooxymethyl)pyrimidine is bound at residue Lys-137. Residues Gly-166 and 186–187 (VS) contribute to the 2-[(2R,5Z)-2-carboxy-4-methylthiazol-5(2H)-ylidene]ethyl phosphate site.

It belongs to the thiamine-phosphate synthase family. Mg(2+) serves as cofactor.

The enzyme catalyses 2-[(2R,5Z)-2-carboxy-4-methylthiazol-5(2H)-ylidene]ethyl phosphate + 4-amino-2-methyl-5-(diphosphooxymethyl)pyrimidine + 2 H(+) = thiamine phosphate + CO2 + diphosphate. The catalysed reaction is 2-(2-carboxy-4-methylthiazol-5-yl)ethyl phosphate + 4-amino-2-methyl-5-(diphosphooxymethyl)pyrimidine + 2 H(+) = thiamine phosphate + CO2 + diphosphate. It carries out the reaction 4-methyl-5-(2-phosphooxyethyl)-thiazole + 4-amino-2-methyl-5-(diphosphooxymethyl)pyrimidine + H(+) = thiamine phosphate + diphosphate. It functions in the pathway cofactor biosynthesis; thiamine diphosphate biosynthesis; thiamine phosphate from 4-amino-2-methyl-5-diphosphomethylpyrimidine and 4-methyl-5-(2-phosphoethyl)-thiazole: step 1/1. Functionally, condenses 4-methyl-5-(beta-hydroxyethyl)thiazole monophosphate (THZ-P) and 2-methyl-4-amino-5-hydroxymethyl pyrimidine pyrophosphate (HMP-PP) to form thiamine monophosphate (TMP). The polypeptide is Thiamine-phosphate synthase (Citrobacter koseri (strain ATCC BAA-895 / CDC 4225-83 / SGSC4696)).